The chain runs to 1112 residues: MKVEEKAGVKKLEPTSYRRRHPEQDFPSIHIGFPVPGYSQRKSDSKGHLSGLQRVQWSLQPDKSQQDLAGPDGIKASSLGGSVDFTKRIRSPAAEQLQDILGEEDEAPNPTLFTEMDTLQHDGDQMEWKESARWIKFEEKVEEGGERWSKPHVSTLSLHSLFELRTCLQTGTVLLDLDSGSLPQIIDDVIEKQIEGGLLRPELRERVSYVLLRKHRHQTKKPIHRSLADIGKSVSTTNRSSARSPSAGPTLHHSTEDLRIRQSTSYGHLCHAQSRSMNDISHTPNTDQRKNKFMKKIPKDSEASNVLVGEVDFLDQPFIAFVRLAQSSMLGGVTEVPVPTRFLFILLGPSGRAKSYNEIGRAIATLMVDDLFSDVAYKARNREDLIAGVDEFLDEVIVLPPGEWDPNIRIEPPKKVPSADKRKSVFSLAELGQMNGSVGRSGASAGGGGSGGGAGGSGAGGGGSGNEAEMPAMHEIGEELIWTGRFFGGLRLDVKRKLPWFPSDFYDGFHIQSISAVLFIYLGCITNAITFGGLLGDATDNYQGVMESFLGTAMAGSLFCLFSGQPLIILSSTGPILIFEKLLFDFSKANGLDYMEFRLWIGLHSAIQCLILVATDASFIIKYITRFTEEGFSTLISFIFIYDAIKKMIGAFKYYPINTDFKPDSITTYKCECVAPDTVNTTTVNDSALLVPNTNMSVYTPLNLTALDWSLLSKKECLSYGGRLLGSSCQFVPDLALMSFILFFGTYSMTLTLKKFKFSRYFPTKVRTLVADFSIVFSILLFCGIDACFGLQTPKLHVPNVIKPTRPDRGWFVAPFGKNPWWVYPASILPALLVTILIFMDQQITAVIVNRKENKLRKAAGYHLDLFWVGILMALCSFMGLPWYVAATVISIAHIDSLKMETETSAPGEQPQFLGVREQRVTGVMVFILTGISVFLAPILKYIPMPVLYGVFLYMGVASLNGIQFWDRCKLFLMPAKHQPDHAFLRHVPLRRIHLFTLVQILCLALLWILKSTMAAIIFPVMILGLIIVRRLLDLIFSQHDLAWIDNILPEKEKKESDRKKRRKEVHENTDKEPQFLPPSVVKIPMEGIPSDPQNGIHCVGRKRSSSWSHSL.

Residues 1-13 (MKVEEKAGVKKLE) show a composition bias toward basic and acidic residues. Disordered stretches follow at residues 1 to 80 (MKVE…SSLG), 220 to 255 (KKPI…HHST), and 439 to 469 (GRSG…NEAE). The Cytoplasmic segment spans residues 1 to 513 (MKVEEKAGVK…DFYDGFHIQS (513 aa)). 2 stretches are compositionally biased toward polar residues: residues 53-67 (QRVQ…SQQD) and 233-244 (SVSTTNRSSARS). Residues 444-465 (SAGGGGSGGGAGGSGAGGGGSG) show a composition bias toward gly residues. The helical transmembrane segment at 514–536 (ISAVLFIYLGCITNAITFGGLLG) threads the bilayer. Residues 537 to 547 (DATDNYQGVME) lie on the Extracellular side of the membrane. Residues 548 to 579 (SFLGTAMAGSLFCLFSGQPLIILSSTGPILIF) traverse the membrane as a helical segment. Residues 580 to 598 (EKLLFDFSKANGLDYMEFR) are Cytoplasmic-facing. Residues 599 to 620 (LWIGLHSAIQCLILVATDASFI) form a helical membrane-spanning segment. Topologically, residues 621–734 (IKYITRFTEE…LGSSCQFVPD (114 aa)) are extracellular. A helical transmembrane segment spans residues 735-753 (LALMSFILFFGTYSMTLTL). Topologically, residues 754–772 (KKFKFSRYFPTKVRTLVAD) are cytoplasmic. A helical membrane pass occupies residues 773 to 792 (FSIVFSILLFCGIDACFGLQ). Over 793–820 (TPKLHVPNVIKPTRPDRGWFVAPFGKNP) the chain is Extracellular. A helical membrane pass occupies residues 821 to 839 (WWVYPASILPALLVTILIF). Residues 840-858 (MDQQITAVIVNRKENKLRK) are Cytoplasmic-facing. Residues 859–875 (AAGYHLDLFWVGILMAL) form a helical membrane-spanning segment. Residues 876–880 (CSFMG) lie on the Extracellular side of the membrane. Residues 881 to 900 (LPWYVAATVISIAHIDSLKM) form a helical membrane-spanning segment. Residues 901 to 920 (ETETSAPGEQPQFLGVREQR) are Cytoplasmic-facing. Residues 921–940 (VTGVMVFILTGISVFLAPIL) form a helical membrane-spanning segment. The Extracellular segment spans residues 941 to 945 (KYIPM). Residues 946 to 966 (PVLYGVFLYMGVASLNGIQFW) traverse the membrane as a helical segment. The Cytoplasmic portion of the chain corresponds to 967–992 (DRCKLFLMPAKHQPDHAFLRHVPLRR). Residues 993-1010 (IHLFTLVQILCLALLWIL) form a helical membrane-spanning segment. Residues 1011–1015 (KSTMA) lie on the Extracellular side of the membrane. Residues 1016 to 1033 (AIIFPVMILGLIIVRRLL) form a helical membrane-spanning segment. Topologically, residues 1034 to 1112 (DLIFSQHDLA…KRSSSWSHSL (79 aa)) are cytoplasmic. A compositionally biased stretch (basic and acidic residues) spans 1055–1074 (KESDRKKRRKEVHENTDKEP). Residues 1055–1112 (KESDRKKRRKEVHENTDKEPQFLPPSVVKIPMEGIPSDPQNGIHCVGRKRSSSWSHSL) are disordered.

This sequence belongs to the anion exchanger (TC 2.A.31) family. In terms of tissue distribution, observed in hepatocytes and in the apical region of bile duct intrahepatic cholangiocytes of liver. Also observed in uroepithelium cells lining the outer pelvic wall of the kidney (at protein level). Highly expressed in colon, distal colon, liver, kidney and testis. Moderate expression in duodenum and stomach and weak expression in heart. In kidney, very weakly expressed in the inner medulla, but abundantly expressed in cortex and outer medulla in the medullary thick ascending and cortical thick ascending limbs of the loop of Henle.

It localises to the basolateral cell membrane. Its subcellular location is the apical cell membrane. The enzyme catalyses 2 hydrogencarbonate(out) + Na(+)(out) = 2 hydrogencarbonate(in) + Na(+)(in). It catalyses the reaction 3 hydrogencarbonate(out) + Na(+)(out) = 3 hydrogencarbonate(in) + Na(+)(in). In terms of biological role, mediates sodium- and bicarbonate-dependent electrogenic sodium bicarbonate cotransport, with a Na(+):HCO3(-) stoichiometry varying from 1:2 to 1:3. In Rattus norvegicus (Rat), this protein is Electrogenic sodium bicarbonate cotransporter 4.